Consider the following 331-residue polypeptide: Vitamin B12 import system permease protein BtuC (331 aa).

7 consecutive transmembrane segments (helical) span residues Leu-21–Ile-43, Pro-63–Val-85, Leu-90–Leu-112, Leu-116–Leu-138, Leu-151–Thr-173, Trp-193–Ser-210, and Val-239–Ile-261.

The protein belongs to the binding-protein-dependent transport system permease family. FecCD subfamily. In terms of assembly, the complex is composed of two ATP-binding proteins (BtuD), two transmembrane proteins (BtuC) and a solute-binding protein (BtuF).

The protein localises to the cell inner membrane. Its function is as follows. Part of the ABC transporter complex BtuCDF involved in vitamin B12 import. Involved in the translocation of the substrate across the membrane. In Pectobacterium atrosepticum (strain SCRI 1043 / ATCC BAA-672) (Erwinia carotovora subsp. atroseptica), this protein is Vitamin B12 import system permease protein BtuC.